A 932-amino-acid chain; its full sequence is Potassium voltage-gated channel subfamily KQT member 5 (932 aa).

Residues Met-1–Trp-125 are Cytoplasmic-facing. Phosphoserine is present on Ser-88. Residues Ala-126 to Phe-146 form a helical membrane-spanning segment. At Ser-147–Ala-156 the chain is on the extracellular side. A helical transmembrane segment spans residues Ser-157–Ile-177. The Cytoplasmic segment spans residues Arg-178 to Lys-200. Residues Pro-201 to Thr-221 form a helical membrane-spanning segment. Topologically, residues Gln-222–Ser-229 are extracellular. The chain crosses the membrane as a helical; Voltage-sensor span at residues Ala-230 to Trp-252. Positions 248 and 264 each coordinate a 1,2-diacyl-sn-glycero-3-phospho-(1D-myo-inositol-4,5-bisphosphate). Residues Lys-253–Leu-266 are Cytoplasmic-facing. A helical transmembrane segment spans residues Ile-267 to Val-287. Residues Glu-288–Tyr-298 lie on the Extracellular side of the membrane. The pore-forming intramembrane region spans Ala-299 to Pro-319. Residues Leu-320–Arg-325 are Extracellular-facing. A helical transmembrane segment spans residues Leu-326–Leu-346. At Gly-347–Lys-932 the chain is on the cytoplasmic side. Lys-361 contributes to the a 1,2-diacyl-sn-glycero-3-phospho-(1D-myo-inositol-4,5-bisphosphate) binding site. The interaction with CALM stretch occupies residues Ala-370–Trp-378. Residues Ser-404 to Trp-465 are disordered. Over residues Arg-431–Ala-440 the composition is skewed to polar residues. A Phosphoserine modification is found at Ser-447. Positions Val-521–Met-528 are interaction with CALM. The disordered stretch occupies residues Ser-655–Arg-678. Ser-831 is modified (phosphoserine). Positions Val-876 to Thr-885 are enriched in acidic residues. The interval Val-876–Glu-919 is disordered. Positions Ala-888–Ala-899 are enriched in low complexity. Positions Ser-902 to Ile-914 are enriched in polar residues.

It belongs to the potassium channel family. KQT (TC 1.A.1.15) subfamily. Kv7.5/KCNQ5 sub-subfamily. Homotetramer; forms a functional homotetrameric channel resulting in the expression of a small M-current. Heterotetramer with KCNQ3; forms heterotetrameric M-channel responsible for the native M-current. Heterotetramer with KCNQ1; forms a functional voltage-gated potassium channel. Interacts (via C-terminus) with calmodulin/CALM1; forms a heterooctameric structure (with 4:4 KCNQ1:CALM stoichiometry); the interaction is calcium-independent, constitutive and participates in the channel function. Strongly expressed in brain and skeletal muscle. In brain, expressed in cerebral cortex, occipital pole, frontal lobe and temporal lobe. Lower levels in hippocampus and putamen. Low to undetectable levels in medulla, cerebellum and thalamus.

Its subcellular location is the cell membrane. It carries out the reaction K(+)(in) = K(+)(out). With respect to regulation, phosphatidylinositol-4,5-bisphosphate (PIP2) is essential to activate KCNQ5 channel by inducing the coupling of the voltage-sensing domain (VSD) and the pore-forming domain (PD). Calcium suppresses KCNQ5 channel current through calcium-bound CALM C-terminus. Therefore CALM acts as calcium sensor that controls channel activity. Activated by niflumic acid and the anticonvulsant retigabine. Inhibited by barium, linopirdine, XE991 and tetraethylammonium (as homomer). Insensitive to tetraethylammonium in KCNQ3-KCNQ5 heteromers. In terms of biological role, pore-forming subunit of the voltage-gated potassium (Kv) channel broadly expressed in brain and involved in the regulation of neuronal excitability. Associates with KCNQ3/Kv7.3 pore-forming subunit to form a potassium channel which contributes to M-type current, a slowly activating and deactivating potassium conductance which plays a critical role in determining the subthreshold electrical excitability of neurons. Contributes, with other potassium channels, to the molecular diversity of a heterogeneous population of M-channels, varying in kinetic and pharmacological properties, which underlie this physiologically important current. Also forms a functional channel with KCNQ1/Kv7.1 subunit that may contribute to vasoconstriction and hypertension. Channel may be selectively permeable in vitro to other cations besides potassium, in decreasing order of affinity K(+) = Rb(+) &gt; Cs(+) &gt; Na(+). Similar to the native M-channel, KCNQ3-KCNQ5 potassium channel is suppressed by activation of the muscarinic acetylcholine receptor CHRM1. This Homo sapiens (Human) protein is Potassium voltage-gated channel subfamily KQT member 5.